An 891-amino-acid chain; its full sequence is DNA mismatch repair protein MutS (891 aa).

639-646 lines the ATP pocket; that stretch reads GPNMAGKS. Residues 827 to 854 are disordered; the sequence is TIQEARPSAQGSEEKTPSSPAEKGLSLF.

This sequence belongs to the DNA mismatch repair MutS family.

Functionally, this protein is involved in the repair of mismatches in DNA. It is possible that it carries out the mismatch recognition step. This protein has a weak ATPase activity. The protein is DNA mismatch repair protein MutS of Treponema denticola (strain ATCC 35405 / DSM 14222 / CIP 103919 / JCM 8153 / KCTC 15104).